A 247-amino-acid polypeptide reads, in one-letter code: Neurotrophic factor BDNF precursor form (247 aa).

The N-terminal stretch at 1–18 (MTILFLTMVISYFGCMKA) is a signal peptide. The propeptide occupies 19 to 128 (APMKEASVRG…AANMSMRVRR (110 aa)). Residue N121 is glycosylated (N-linked (GlcNAc...) asparagine). 3 disulfides stabilise this stretch: C141/C208, C186/C237, and C196/C239.

Belongs to the NGF-beta family. Monomers and homodimers. Binds to NTRK2/TRKB. Can form heterodimers with other neurotrophin family members, such as NTF3 and NTF4 (in vitro), but the physiological relevance of this is not clear. BDNF precursor form: interacts with the heterodimer formed by NGFR and SORCS2. Mature BDNF has much lower affinity for the heterodimer formed by NGFR and SORCS2. Post-translationally, N-glycosylated and glycosulfated, contrary to mature BDNF. Mature BDNF is produced by proteolytic removal of the propeptide, catalyzed by a FURIN family member. In addition, the precursor form is proteolytically cleaved within the propeptide, but this is not an obligatory intermediate for the production of mature BDNF. Can be converted into mature BDNF by plasmin (PLG).

It localises to the secreted. Important signaling molecule that activates signaling cascades downstream of NTRK2. During development, promotes the survival and differentiation of selected neuronal populations of the peripheral and central nervous systems. Participates in axonal growth, pathfinding and in the modulation of dendritic growth and morphology. Major regulator of synaptic transmission and plasticity at adult synapses in many regions of the CNS. The versatility of BDNF is emphasized by its contribution to a range of adaptive neuronal responses including long-term potentiation (LTP), long-term depression (LTD), certain forms of short-term synaptic plasticity, as well as homeostatic regulation of intrinsic neuronal excitability. The protein is Neurotrophic factor BDNF precursor form (BDNF) of Canis lupus familiaris (Dog).